A 207-amino-acid polypeptide reads, in one-letter code: Nitrile hydratase subunit alpha (207 aa).

Fe(3+) contacts are provided by Cys-110, Cys-113, Ser-114, and Cys-115. A Cysteine sulfinic acid (-SO2H) modification is found at Cys-113. A Cysteine sulfenic acid (-SOH) modification is found at Cys-115.

The protein belongs to the nitrile hydratase subunit alpha family. In terms of assembly, heterodimer of an alpha and a beta chain. Requires Fe(3+) as cofactor. Post-translationally, oxidation on Cys-113 is essential for the activity. In terms of processing, oxidation on Cys-115 stabilizes the Fe-NO ligand coordinated in the inactive form.

The enzyme catalyses an aliphatic primary amide = an aliphatic nitrile + H2O. Inactivated by nitrosylation of the iron center in the dark and activated by photo-induced nitric oxide (NO) release. Inactivated by oxidation of Cys-115 to a sulfenic acid. NHase catalyzes the hydration of various nitrile compounds to the corresponding amides. Industrial production of acrylamide is now being developed using some of the enzymes of this class. This chain is Nitrile hydratase subunit alpha (nthA), found in Rhodococcus erythropolis (Arthrobacter picolinophilus).